The sequence spans 198 residues: Recombination protein RecR (198 aa).

A C4-type zinc finger spans residues 57 to 72 (CSVCGHITDQDPCYIC). The region spanning 80 to 175 (SVICVVQDPK…KLSRIAHGLP (96 aa)) is the Toprim domain.

The protein belongs to the RecR family.

Its function is as follows. May play a role in DNA repair. It seems to be involved in an RecBC-independent recombinational process of DNA repair. It may act with RecF and RecO. The chain is Recombination protein RecR from Bacillus pumilus (strain SAFR-032).